We begin with the raw amino-acid sequence, 260 residues long: Lys-63-specific deubiquitinase BRCC36 (260 aa).

The MPN domain maps to 6 to 149 (VHLESDAFLV…YTCFQSVQAQ (144 aa)). Zn(2+) is bound by residues His-92, His-94, and Asp-105. A JAMM motif motif is present at residues 92 to 105 (HSHPHITVWPSHVD).

The protein belongs to the peptidase M67A family. BRCC36 subfamily. In terms of assembly, component of the BRCA1-A complex, at least composed of brca1, bard1, uimc1/rap80, abraxas1, brcc3/brcc36, babam2 and babam1/nba1. In the BRCA1-A complex, interacts directly with abraxas1 and babam2. Component of the BRISC complex, at least composed of abraxas2, brcc3/brcc36, babam2 and babam1/nba1. Within the complex, interacts directly with abraxas2. Both the BRCA1-A complex and the BRISC complex bind polyubiquitin. Zn(2+) is required as a cofactor.

The protein resides in the nucleus. It localises to the cytoplasm. Its subcellular location is the cytoskeleton. The protein localises to the spindle pole. Its function is as follows. Metalloprotease that specifically cleaves 'Lys-63'-linked polyubiquitin chains. Does not have activity toward 'Lys-48'-linked polyubiquitin chains. Component of the BRCA1-A complex, a complex that specifically recognizes 'Lys-63'-linked ubiquitinated histones H2A and H2AX at DNA lesions sites, leading to target the brca1-bard1 heterodimer to sites of DNA damage at double-strand breaks (DSBs). In the BRCA1-A complex, it specifically removes 'Lys-63'-linked ubiquitin on histones H2A and H2AX, antagonizing the rnf8-dependent ubiquitination at double-strand breaks (DSBs). Catalytic subunit of the BRISC complex, a multiprotein complex that specifically cleaves 'Lys-63'-linked ubiquitin in various substrates. Mediates the specific 'Lys-63'-specific deubiquitination associated with the COP9 signalosome complex (CSN), via the interaction of the BRISC complex with the CSN complex. The BRISC complex is required for normal mitotic spindle assembly and microtubule attachment to kinetochores via its role in deubiquitinating numa1. Plays a role in interferon signaling via its role in the deubiquitination of the interferon receptor ifnar1; deubiquitination increases ifnar1 activity by enhancing its stability and cell surface expression. Acts as a regulator of the NLRP3 inflammasome by mediating deubiquitination of nlrp3. Down-regulates the response to bacterial lipopolysaccharide (LPS) via its role in ifnar1 deubiquitination. This Salmo salar (Atlantic salmon) protein is Lys-63-specific deubiquitinase BRCC36 (brcc3).